Here is a 999-residue protein sequence, read N- to C-terminus: Hypoxia up-regulated protein 1 (999 aa).

Residues 1 to 32 form the signal peptide; it reads MAATVRRQRPRRLLCWALVAVLLADLLALSDT. N-linked (GlcNAc...) asparagine glycans are attached at residues Asn-155, Asn-222, and Asn-515. Residue Ser-567 is modified to Phosphoserine. Positions 567–694 are disordered; the sequence is SPEEESTLTK…KKPKPARKQK (128 aa). The segment covering 574–583 has biased composition (polar residues); sequence LTKLGNTISS. N-linked (GlcNAc...) asparagine glycosylation occurs at Asn-596. Composition is skewed to basic and acidic residues over residues 611–626 and 641–668; these read GSKD…KEEA and PKGD…KPNE. Residues 669 to 680 are compositionally biased toward low complexity; the sequence is KGQAGPEGAAPA. N-linked (GlcNAc...) asparagine glycosylation is found at Asn-830, Asn-862, and Asn-869. Residue Lys-883 is modified to N6-acetyllysine. Positions 909–999 are disordered; it reads AKFTKPRPRP…QKRPSKNDEL (91 aa). Residues Asn-922 and Asn-931 are each glycosylated (N-linked (GlcNAc...) asparagine). Over residues 949–962 the composition is skewed to basic and acidic residues; it reads EEAKPILEPDKEET. The Prevents secretion from ER signature appears at 996-999; the sequence is NDEL.

It belongs to the heat shock protein 70 family. As to quaternary structure, part of a large chaperone multiprotein complex comprising DNAJB11, HSP90B1, HSPA5, HYOU, PDIA2, PDIA4, PDIA6, PPIB, SDF2L1, UGGT1 and very small amounts of ERP29, but not, or at very low levels, CALR nor CANX.

The protein resides in the endoplasmic reticulum lumen. Its function is as follows. Has a pivotal role in cytoprotective cellular mechanisms triggered by oxygen deprivation. Promotes HSPA5/BiP-mediated ATP nucleotide exchange and thereby activates the unfolded protein response (UPR) pathway in the presence of endoplasmic reticulum stress. May play a role as a molecular chaperone and participate in protein folding. The polypeptide is Hypoxia up-regulated protein 1 (Hyou1) (Mus musculus (Mouse)).